Here is a 386-residue protein sequence, read N- to C-terminus: Succinate--CoA ligase [ADP-forming] subunit beta (386 aa).

In terms of domain architecture, ATP-grasp spans 9–244; it reads KALFREHGIP…ETQEDAREAR (236 aa). Residues lysine 46, 53–55, glutamate 99, threonine 102, and glutamate 107 contribute to the ATP site; that span reads GRG. 2 residues coordinate Mg(2+): asparagine 199 and aspartate 213. Substrate contacts are provided by residues asparagine 264 and 321–323; that span reads GIV.

The protein belongs to the succinate/malate CoA ligase beta subunit family. As to quaternary structure, heterotetramer of two alpha and two beta subunits. It depends on Mg(2+) as a cofactor.

It carries out the reaction succinate + ATP + CoA = succinyl-CoA + ADP + phosphate. The catalysed reaction is GTP + succinate + CoA = succinyl-CoA + GDP + phosphate. It participates in carbohydrate metabolism; tricarboxylic acid cycle; succinate from succinyl-CoA (ligase route): step 1/1. Functionally, succinyl-CoA synthetase functions in the citric acid cycle (TCA), coupling the hydrolysis of succinyl-CoA to the synthesis of either ATP or GTP and thus represents the only step of substrate-level phosphorylation in the TCA. The beta subunit provides nucleotide specificity of the enzyme and binds the substrate succinate, while the binding sites for coenzyme A and phosphate are found in the alpha subunit. This is Succinate--CoA ligase [ADP-forming] subunit beta from Thioalkalivibrio sulfidiphilus (strain HL-EbGR7).